A 353-amino-acid chain; its full sequence is Iron(III) enterobactin esterase (353 aa).

Belongs to the Fes family.

Its subcellular location is the cytoplasm. The catalysed reaction is Fe(III)-enterobactin + 3 H2O + H(+) = Fe(III)-[N-(2,3-dihydroxybenzoyl)-L-serine] + 2 N-(2,3-dihydroxybenzoyl)-L-serine. The enzyme catalyses Fe(III)-enterobactin + H2O = Fe(III)-[N-(2,3-dihydroxybenzoyl)-L-serine]3 + H(+). It carries out the reaction Fe(III)-[N-(2,3-dihydroxybenzoyl)-L-serine]3 + H2O + H(+) = Fe(III)-[N-(2,3-dihydroxybenzoyl)-L-serine]2 + N-(2,3-dihydroxybenzoyl)-L-serine. It catalyses the reaction Fe(III)-[N-(2,3-dihydroxybenzoyl)-L-serine]2 + H2O + H(+) = Fe(III)-[N-(2,3-dihydroxybenzoyl)-L-serine] + N-(2,3-dihydroxybenzoyl)-L-serine. In terms of biological role, catalyzes the hydrolysis of ferric enterobactin (Fe-Ent). Is responsible for the release of iron from ferric enterobactin. The polypeptide is Iron(III) enterobactin esterase (Yersinia enterocolitica).